The primary structure comprises 213 residues: Alkylbase DNA glycosidase-like protein mag2 (213 aa).

DNA is bound by residues Lys-53, Leu-54, Ser-61, His-91, Gly-94, Ser-96, Lys-97, Lys-99, Glu-102, Lys-137, Gly-138, Lys-140, Thr-143, Ser-163, and Thr-164.

It belongs to the alkylbase DNA glycosidase AlkA family.

The protein localises to the nucleus. Alkylbase DNA glycosidase-like protein that shows no DNA glycosylase activity for alkylated bases. The molecular role of mag2 appears to be abasic (AP) site recognition and protection, while possibly facilitating damage signaling by structurally sculpting the DNA substrate. Stimulates AP site binding to mismatch repair protein mutS. The sequence is that of Alkylbase DNA glycosidase-like protein mag2 from Schizosaccharomyces pombe (strain 972 / ATCC 24843) (Fission yeast).